A 179-amino-acid chain; its full sequence is Ribosome maturation factor RimM (179 aa).

One can recognise a PRC barrel domain in the interval 102-179 (DGEYYWYQLE…EMKVEWDADF (78 aa)).

Belongs to the RimM family. Binds ribosomal protein uS19.

It is found in the cytoplasm. In terms of biological role, an accessory protein needed during the final step in the assembly of 30S ribosomal subunit, possibly for assembly of the head region. Essential for efficient processing of 16S rRNA. May be needed both before and after RbfA during the maturation of 16S rRNA. It has affinity for free ribosomal 30S subunits but not for 70S ribosomes. This is Ribosome maturation factor RimM from Pseudomonas syringae pv. tomato (strain ATCC BAA-871 / DC3000).